The sequence spans 733 residues: Phosphoribosylformylglycinamidine synthase subunit PurL (733 aa).

His44 is a catalytic residue. ATP-binding residues include Tyr47 and Lys86. Glu88 is a Mg(2+) binding site. Substrate is bound by residues Ser89 to His92 and Arg111. His90 serves as the catalytic Proton acceptor. Position 112 (Asp112) interacts with Mg(2+). Gln233 is a substrate binding site. Asp261 contacts Mg(2+). Glu305–Gln307 contacts substrate. ATP is bound by residues Asp492 and Gly529. Asn530 contributes to the Mg(2+) binding site. Ser532 contributes to the substrate binding site.

It belongs to the FGAMS family. As to quaternary structure, monomer. Part of the FGAM synthase complex composed of 1 PurL, 1 PurQ and 2 PurS subunits.

Its subcellular location is the cytoplasm. The enzyme catalyses N(2)-formyl-N(1)-(5-phospho-beta-D-ribosyl)glycinamide + L-glutamine + ATP + H2O = 2-formamido-N(1)-(5-O-phospho-beta-D-ribosyl)acetamidine + L-glutamate + ADP + phosphate + H(+). The protein operates within purine metabolism; IMP biosynthesis via de novo pathway; 5-amino-1-(5-phospho-D-ribosyl)imidazole from N(2)-formyl-N(1)-(5-phospho-D-ribosyl)glycinamide: step 1/2. In terms of biological role, part of the phosphoribosylformylglycinamidine synthase complex involved in the purines biosynthetic pathway. Catalyzes the ATP-dependent conversion of formylglycinamide ribonucleotide (FGAR) and glutamine to yield formylglycinamidine ribonucleotide (FGAM) and glutamate. The FGAM synthase complex is composed of three subunits. PurQ produces an ammonia molecule by converting glutamine to glutamate. PurL transfers the ammonia molecule to FGAR to form FGAM in an ATP-dependent manner. PurS interacts with PurQ and PurL and is thought to assist in the transfer of the ammonia molecule from PurQ to PurL. This Thermomicrobium roseum (strain ATCC 27502 / DSM 5159 / P-2) protein is Phosphoribosylformylglycinamidine synthase subunit PurL.